We begin with the raw amino-acid sequence, 535 residues long: MQLTVWTYEGPPHVGAMRVATGMEGLHYVLHAPQGDTYADLLFTMIERRNKRPPVTYTTFAARDLGKDTAELFMKAARDAYERFKPQAMIVGASCTGSLIQDDPGGLAKSLGFPIPVVAIDLPAYQRKENWGAAETLYQLVRALAGPKAPAPGAKRPERAPGVRPTCNLLGPTALGFRHRDDITEITGLLGKLGIDVNVVAPMGATPADIARLGDADFNVVMYPEIAGQAASWLHRIFHQPFTKTVPIGVSATRDFIKEVAQLAGVDATAVLEAASTRLPWYSHSVDSTYLTNKRVFIFGDATHAIAAARIASEELGFKVVGLGSYSREFGRELREAAKHYDVEPLITDDYLEVEAKVAELHPELVLGTQMERHIAKRLGVPCAVISAPVHVQDFPARYAPQMGFEGANVIFDTWVHPLMMGLEEHLLTMFKDDFEFKDGAMPSHLGTGHAAPVAEVIAESAPPAVAATAPEIVSVANAAASAAVWAPEAEKELQKIPFFVRGKARRNTERFANENGVATITVETLYDAKAHFAR.

Asp-36 is a [4Fe-4S] cluster binding site. Residue Asp-287 is the Proton donor of the active site. Substrate is bound at residue 422–423 (GL).

It belongs to the ChlB/BchB/BchZ family. Protochlorophyllide reductase is composed of three subunits; BchL, BchN and BchB. Forms a heterotetramer of two BchB and two BchN subunits. It depends on [4Fe-4S] cluster as a cofactor.

The enzyme catalyses chlorophyllide a + oxidized 2[4Fe-4S]-[ferredoxin] + 2 ADP + 2 phosphate = protochlorophyllide a + reduced 2[4Fe-4S]-[ferredoxin] + 2 ATP + 2 H2O. The protein operates within porphyrin-containing compound metabolism; bacteriochlorophyll biosynthesis (light-independent). Functionally, component of the dark-operative protochlorophyllide reductase (DPOR) that uses Mg-ATP and reduced ferredoxin to reduce ring D of protochlorophyllide (Pchlide) to form chlorophyllide a (Chlide). This reaction is light-independent. The NB-protein (BchN-BchB) is the catalytic component of the complex. In Rhodopseudomonas palustris (strain BisB5), this protein is Light-independent protochlorophyllide reductase subunit B.